The primary structure comprises 976 residues: MAGRARSGLLLLLLGLLALQSSCLAFRSPLSVFKRFKETTRSFSNECLGTIGPVTPLDASDFALDIRMPGVTPKESDTYFCMSMRLPVDEEAFVIDFKPRASMDTVHHMLLFGCNMPSSTGSYWFCDEGTCTDKANILYAWARNAPPTRLPKGVGFRVGGETGSKYFVLQVHYGDISAFRDNHKDCSGVSVHLTRVPQPLIAGMYLMMSVDTVIPPGEKVVNADISCQYKMYPMHVFAYRVHTHHLGKVVSGYRVRNGQWTLIGRQNPQLPQAFYPVEHPVDVTFGDILAARCVFTGEGRTEATHIGGTSSDEMCNLYIMYYMEAKYALSFMTCTKNVAPDMFRTIPAEANIPIPVKPDMVMMHGHHKEAENKEKSALMQQPKQGEEEVLEQGDFYSLLSKLLGEREDVHVHKYNPTEKTESGSDLVAEIANVVQKKDLGRSDAREGAEHEEWGNAILVRDRIHRFHQLESTLRPAESRAFSFQQPGEGPWEPEPSGDFHVEEELDWPGVYLLPGQVSGVALDSKNNLVIFHRGDHVWDGNSFDSKFVYQQRGLGPIEEDTILVIDPNNAEILQSSGKNLFYLPHGLSIDTDGNYWVTDVALHQVFKLDPHSKEGPLLILGRSMQPGSDQNHFCQPTDVAVEPSTGAVFVSDGYCNSRIVQFSPSGKFVTQWGEESSGSSPRPGQFSVPHSLALVPHLDQLCVADRENGRIQCFKTDTKEFVREIKHASFGRNVFAISYIPGFLFAVNGKPYFGDQEPVQGFVMNFSSGEIIDVFKPVRKHFDMPHDIVASEDGTVYIGDAHTNTVWKFTLTEKMEHRSVKKAGIEVQEIKEAEAVVEPKVENKPTSSELQKMQEKQKLSTEPGSGVSVVLITTLLVIPVLVLLAIVMFIRWKKSRAFGDHDRKLESSSGRVLGRFRGKGSGGLNLGNFFASRKGYSRKGFDRVSTEGSDQEKDEDDGTESEEEYSAPLPKPAPSS.

A signal peptide spans 1–25 (MAGRARSGLLLLLLGLLALQSSCLA). The peptidylglycine alpha-hydroxylating monooxygenase stretch occupies residues 1-497 (MAGRARSGLL…EGPWEPEPSG (497 aa)). Positions 26-35 (FRSPLSVFKR) are excised as a propeptide. The Intragranular portion of the chain corresponds to 36-866 (FKETTRSFSN…QKLSTEPGSG (831 aa)). 5 disulfide bridges follow: cysteine 47–cysteine 186, cysteine 81–cysteine 126, cysteine 114–cysteine 131, cysteine 227–cysteine 334, and cysteine 293–cysteine 315. Cu(2+) is bound by residues histidine 107 and histidine 108. Residues histidine 172, histidine 242, histidine 244, and methionine 314 each coordinate Cu(2+). The interval 498 to 820 (DFHVEEELDW…LTEKMEHRSV (323 aa)) is peptidyl-alpha-hydroxyglycine alpha-amidating lyase. NHL repeat units follow at residues 501-544 (VEEE…NSFD), 570-611 (AEIL…LDPH), 620-665 (LGRS…FSPS), and 673-717 (GEES…FKTD). A Ca(2+)-binding site is contributed by valine 520. Arginine 533 serves as a coordination point for a protein. Zn(2+) is bound at residue histidine 585. Leucine 587 serves as a coordination point for Ca(2+). Cysteine 634 and cysteine 655 are joined by a disulfide. Tyrosine 654 serves as a coordination point for a protein. Residue histidine 690 coordinates Zn(2+). A disulfide bridge links cysteine 702 with cysteine 713. Position 706 (arginine 706) interacts with a protein. N-linked (GlcNAc...) asparagine glycosylation is present at asparagine 765. An NHL 5 repeat occupies 769 to 812 (GEIIDVFKPVRKHFDMPHDIVASEDGTVYIGDAHTNTVWKFTLT). The residue at position 774 (valine 774) is a Sulfotyrosine. Histidine 786 serves as a coordination point for Zn(2+). Aspartate 787 provides a ligand contact to Ca(2+). At glutamate 792 the chain carries Sulfotyrosine. The helical transmembrane segment at 867-890 (VSVVLITTLLVIPVLVLLAIVMFI) threads the bilayer. The Cytoplasmic portion of the chain corresponds to 891–976 (RWKKSRAFGD…APLPKPAPSS (86 aa)). A phosphoserine mark is found at serine 921, serine 932, and serine 945. The interaction with RASSF9 stretch occupies residues 928–945 (NFFASRKGYSRKGFDRVS). Positions 940-976 (GFDRVSTEGSDQEKDEDDGTESEEEYSAPLPKPAPSS) are disordered. At threonine 946 the chain carries Phosphothreonine. Serine 949 is subject to Phosphoserine. The segment covering 952–965 (EKDEDDGTESEEEY) has biased composition (acidic residues). Threonine 959 carries the post-translational modification Phosphothreonine. A Phosphoserine modification is found at serine 961.

This sequence in the C-terminal section; belongs to the peptidyl-alpha-hydroxyglycine alpha-amidating lyase family. The protein in the N-terminal section; belongs to the copper type II ascorbate-dependent monooxygenase family. As to quaternary structure, monomer. Interacts with RASSF9. It depends on Zn(2+) as a cofactor. The cofactor is Cu(2+).

The protein resides in the cytoplasmic vesicle. The protein localises to the secretory vesicle membrane. It is found in the membrane. Its subcellular location is the secreted. The catalysed reaction is a [peptide]-C-terminal glycine + 2 L-ascorbate + O2 = a [peptide]-C-terminal (2S)-2-hydroxyglycine + 2 monodehydro-L-ascorbate radical + H2O. It catalyses the reaction a [peptide]-C-terminal (2S)-2-hydroxyglycine = a [peptide]-C-terminal amide + glyoxylate. The enzyme catalyses N-dodecanoylglycine + 2 L-ascorbate + O2 = N-dodecanoyl-(2S)-hydroxyglycine + 2 monodehydro-L-ascorbate radical + H2O. It carries out the reaction N-dodecanoyl-(2S)-hydroxyglycine = dodecanamide + glyoxylate. The catalysed reaction is N-(9Z,12Z,15Z)-octadecatrienoylglycine + 2 L-ascorbate + O2 = N-(9Z,12Z,15Z)-octadecatrienoyl-(2S)-hydroxyglycine + 2 monodehydro-L-ascorbate radical + H2O. It catalyses the reaction N-(9Z,12Z,15Z)-octadecatrienoyl-(2S)-hydroxyglycine = (9Z,12Z,15Z)-octadecatrienamide + glyoxylate. The enzyme catalyses N-(9Z-octadecenoyl)glycine + 2 L-ascorbate + O2 = N-(9Z-octadecenoyl)-(2S)-hydroxyglycine + 2 monodehydro-L-ascorbate radical + H2O. It carries out the reaction N-(9Z-octadecenoyl)-(2S)-hydroxyglycine = (9Z)-octadecenamide + glyoxylate. The catalysed reaction is N-tetradecanoylglycine + 2 L-ascorbate + O2 = N-tetradecanoyl-(2S)-hydroxyglycine + 2 monodehydro-L-ascorbate radical + H2O. It catalyses the reaction N-tetradecanoyl-(2S)-hydroxyglycine = tetradecamide + glyoxylate. The enzyme catalyses N-decanoylglycine + 2 L-ascorbate + O2 = N-decanoyl-(2S)-hydroxyglycine + 2 monodehydro-L-ascorbate radical + H2O. It carries out the reaction N-decanoyl-(2S)-hydroxyglycine = decanamide + glyoxylate. The catalysed reaction is N-octanoylglycine + 2 L-ascorbate + O2 = N-octanoyl-(2S)-hydroxyglycine + 2 monodehydro-L-ascorbate radical + H2O. It catalyses the reaction N-octanoyl-(2S)-hydroxyglycine = octanamide + glyoxylate. Its activity is regulated as follows. PAM activity is inhibited by EDTA, phenylglyoxal and diethyl pyrocarbonate. PAL activity is stimulated by cadmium and inhibited by mercury. In terms of biological role, bifunctional enzyme that catalyzes amidation of the C-terminus of proteins. Alpha-amidation is present at the C-terminus of many endocrine hormones and neuropeptides and is required for their activity. C-terminal amidation also takes place in response to protein fragmentation triggered by oxidative stress, promoting degradation of amidated protein fragments by the proteasome. Alpha-amidation involves two sequential reactions, both of which are catalyzed by separate catalytic domains of the enzyme. The first step, catalyzed by peptidyl alpha-hydroxylating monooxygenase (PHM) domain, is the copper-, ascorbate-, and O2- dependent stereospecific hydroxylation (with S stereochemistry) at the alpha-carbon (C-alpha) of the C-terminal glycine of the peptidylglycine substrate. The second step, catalyzed by the peptidylglycine amidoglycolate lyase (PAL) domain, is the zinc-dependent cleavage of the N-C-alpha bond, producing the alpha-amidated peptide and glyoxylate. Similarly, catalyzes the two-step conversion of an N-fatty acylglycine to a primary fatty acid amide and glyoxylate. This is Peptidylglycine alpha-amidating monooxygenase from Rattus norvegicus (Rat).